The sequence spans 842 residues: MVKKFTSKIKAAVFAAVVAATAIFGPAISSQAVTSVPYKWDNVVIGGGGGFMPGIVFNETEKDLIYARADIGGAYRWDPSTETWIPLLDHFQMDEYSYYGVESIATDPVDPNRVYIVAGMYTNDWLPNMGAILRSTDRGETWEKTILPFKMGGNMPGRSMGERLAIDPNDNRILYLGTRCGNGLWRSTDYGVTWSKVESFPNPGTYIYDPNFDYTKDIIGVVWVVFDKSSSTPGNPTKTIYVGVADKNESIYRSTDGGVTWKAVPGQPKGLLPHHGVLASNGMLYITYGDTCGPYDGNGKGQVWKFNTRTGEWIDITPIPYSSSDNRFCFAGLAVDRQNPDIIMVTSMNAWWPDEYIFRSTDGGATWKNIWEWGMYPERILHYEIDISAAPWLDWGTEKQLPEINPKLGWMIGDIEIDPFNSDRMMYVTGATIYGCDNLTDWDRGGKVKIEVKATGIEECAVLDLVSPPEGAPLVSAVGDLVGFVHDDLKVGPKKMHVPSYSSGTGIDYAELVPNFMALVAKADLYDVKKISFSYDGGRNWFQPPNEAPNSVGGGSVAVAADAKSVIWTPENASPAVTTDNGNSWKVCTNLGMGAVVASDRVNGKKFYAFYNGKFYISTDGGLTFTDTKAPQLPKSVNKIKAVPGKEGHVWLAAREGGLWRSTDGGYTFEKLSNVDTAHVVGFGKAAPGQDYMAIYITGKIDNVLGFFRSDDAGKTWVRINDDEHGYGAVDTAITGDPRVYGRVYIATNGRGIVYGEPASDEPVPTPPQVDKGLVGDLNGDNRINSTDLTLMKRYILKSIEDLPVEDDLWAADINGDGKINSTDYTYLKKYLLQAIPELPKK.

Residues 1 to 32 (MVKKFTSKIKAAVFAAVVAATAIFGPAISSQA) form the signal peptide. Catalysis depends on D70, which acts as the Nucleophile. 4 BNR repeats span residues 134-144 (RSTDRGETWEK), 185-196 (WRSTDYGVTWSK), 252-262 (YRSTDGGVTWK), and 358-368 (FRSTDGGATWK). The active-site Proton donor is D480. BNR repeat units lie at residues 533-541 (FSYDGGRNW), 577-586 (VTTDNGNSWK), 616-626 (YISTDGGLTFT), 660-671 (WRSTDGGYTFEK), and 708-718 (FRSDDAGKTWV). One can recognise a Dockerin domain in the interval 771–841 (DKGLVGDLNG…LLQAIPELPK (71 aa)).

It belongs to the glycosyl hydrolase 74 family.

Its function is as follows. Hydrolyzes the glucosidic bonds of unbranched Glc residues in tamarind seed xyloglucan, producing XXXG, XLXG, XXLG and XLLG. Has low activity on carboxymethylcellulose, lichenan,hydroxyethylcellulose and glucuronoxylan, and no activity on xylan, polygalaturonic acid, wheat arabinoxylan, rhamnogalacturan, curdlan, laminarin, galactomannan, galactan, arabinan and pachyman or amorphous cellulose. The protein is Xyloglucanase Xgh74A of Acetivibrio thermocellus (Hungateiclostridium thermocellum).